The chain runs to 454 residues: CBL-interacting protein kinase 17 (454 aa).

The 256-residue stretch at 13–268 folds into the Protein kinase domain; the sequence is YEMGRTLGEG…MAGIKSHEWF (256 aa). Residues 19 to 27 and K42 contribute to the ATP site; that span reads LGEGNFGKV. D136 acts as the Proton acceptor in catalysis. An activation loop region spans residues 154–183; the sequence is DFGLSALPQHLGNDGLLHTTCGSPNYIAPE. Residues 304-328 enclose the NAF domain; that stretch reads KNSHQINAFQLIGMASSLDLSGFFE. The segment at 334–363 is PPI; sequence QRRIRFTSTHPPKDAFDKIESSATELGFQV.

Belongs to the protein kinase superfamily. CAMK Ser/Thr protein kinase family. SNF1 subfamily. Mn(2+) serves as cofactor.

It carries out the reaction L-seryl-[protein] + ATP = O-phospho-L-seryl-[protein] + ADP + H(+). It catalyses the reaction L-threonyl-[protein] + ATP = O-phospho-L-threonyl-[protein] + ADP + H(+). In terms of biological role, CIPK serine-threonine protein kinases interact with CBL proteins. Binding of a CBL protein to the regulatory NAF domain of CIPK protein lead to the activation of the kinase in a calcium-dependent manner. In Oryza sativa subsp. japonica (Rice), this protein is CBL-interacting protein kinase 17 (CIPK17).